The primary structure comprises 264 residues: Undecaprenyl-diphosphatase (264 aa).

Helical transmembrane passes span 7–27, 41–61, 89–109, 114–134, 144–164, 186–206, 219–239, and 244–264; these read IVLALIQGLSEFLPISSSAHL, LIFDVVVHMGTLSAVIFYYQA, VLLGTIPIGLVGMIFKDFVAV, IEIIAYTTLVFGLLLGFASWF, TISWIDVSFVSMMQILALIPG, IQFSFLLSIPVITLSLILMLI, LLVLGFVISTISAYATIIFVI, and MVGMTPFVIYRLILGVFLFFL.

The protein belongs to the UppP family.

The protein localises to the cell inner membrane. It carries out the reaction di-trans,octa-cis-undecaprenyl diphosphate + H2O = di-trans,octa-cis-undecaprenyl phosphate + phosphate + H(+). In terms of biological role, catalyzes the dephosphorylation of undecaprenyl diphosphate (UPP). Confers resistance to bacitracin. The protein is Undecaprenyl-diphosphatase of Vesicomyosocius okutanii subsp. Calyptogena okutanii (strain HA).